Reading from the N-terminus, the 511-residue chain is MGIQAAEISAILKDQIKNFGQDAEVAEVGQVLSVGDGIARVYGLDKVQAGEMVEFPGGIRGMVLNLETDNVGVVIFGDDRDIKEGDTVKRTGAIVEVPAGKELLGRVVDALGNPIDGKGPLNASERRIADVKAPGIMPRKSVHEPMATGLKSVDAMIPVGRGQRELIIGDRQTGKTAIALDTILNQANYNGREADGMKTLHCIYVAVGQKRSTVAQLVKKLEETGAMAYTTVVAATASDPAPMQYLAPYSATAMGEYFRDNGMDALIIYDDLSKQAVAYRQMSLLLRRPPGREAYPGDVFYLHSRLLERSAKLNEANGAGSLTALPIIETQAGDVSAYIPTNVISITDGQIFLETELFFQGIRPAVNTGLSVSRVGSAAQTKAMKSVAGPVKLELAQYREMAAFAQFGSDLDAATQKLLNRGARLTELMKQPQYSPLTNAEIVIVIYAGTKGYLDGIPVRDVTKWEHGLLQYLRNQKADLLEDMTKNDRKVAGELEDAIKAALDGYAKTYA.

169–176 (GDRQTGKT) is a binding site for ATP.

Belongs to the ATPase alpha/beta chains family. F-type ATPases have 2 components, CF(1) - the catalytic core - and CF(0) - the membrane proton channel. CF(1) has five subunits: alpha(3), beta(3), gamma(1), delta(1), epsilon(1). CF(0) has three main subunits: a(1), b(2) and c(9-12). The alpha and beta chains form an alternating ring which encloses part of the gamma chain. CF(1) is attached to CF(0) by a central stalk formed by the gamma and epsilon chains, while a peripheral stalk is formed by the delta and b chains.

Its subcellular location is the cell inner membrane. The enzyme catalyses ATP + H2O + 4 H(+)(in) = ADP + phosphate + 5 H(+)(out). Produces ATP from ADP in the presence of a proton gradient across the membrane. The alpha chain is a regulatory subunit. The polypeptide is ATP synthase subunit alpha (Paracoccus denitrificans (strain Pd 1222)).